The sequence spans 239 residues: Fatty acid metabolism regulator protein (239 aa).

In terms of domain architecture, HTH gntR-type spans 6-74 (QSPAGFAEEY…HGKPTKVNNF (69 aa)). A DNA-binding region (H-T-H motif) is located at residues 34 to 53 (ERELSELIGVTRTTLREVLQ).

Homodimer.

The protein resides in the cytoplasm. In terms of biological role, multifunctional regulator of fatty acid metabolism. This chain is Fatty acid metabolism regulator protein, found in Cronobacter sakazakii (strain ATCC BAA-894) (Enterobacter sakazakii).